A 395-amino-acid polypeptide reads, in one-letter code: MNENNDDINNLNTPCVLVLDSVVRNNCIKMNERAASLGVNVRPHMKTHKTIEIGKYQFEENKNLNKSRGIIVSTLSEGKFFSKEFKDILYATPIAPNKVKDAYQLHLSIDRLNVMFDNIEHLKSMVDYAIKNPNEFQKKWSVFLKIDCGYHRAGADPKLQSTTDLVELIVNGEYNQYFQFQGIYSHSGHSYKCQTPTDIKNLAIEEARVTGDYGKKLKSLGYKVDTVSIGSTPVCSHLPHNLLSEYGVNEIHPGNYTFYDQMQYELGNCKLEDIGVHVLATIVSIYPERNELLVDAGSLALSSDPGCTHLRDLKVINNFGIVYNDTNLRIVAPSQEVSKIQSTNQSPIDFSKYKIGSKIRIIPNHSCLTAAMFSDYHVINNDNQIINSFKPNKHW.

Lys46 carries the post-translational modification N6-(pyridoxal phosphate)lysine. Pyridoxal 5'-phosphate-binding residues include Tyr184, Tyr191, Thr232, Gly254, and Asn255. 2 residues coordinate Zn(2+): His365 and Cys367.

Belongs to the DSD1 family. It depends on pyridoxal 5'-phosphate as a cofactor. Zn(2+) serves as cofactor.

It catalyses the reaction D-serine = pyruvate + NH4(+). Catalyzes the conversion of D-serine to pyruvate and ammonia. Plays a role in D-serine detoxification. This chain is D-serine dehydratase, found in Dictyostelium discoideum (Social amoeba).